Reading from the N-terminus, the 198-residue chain is Golgi to ER traffic protein 1 (198 aa).

Residues 1–6 lie on the Lumenal side of the membrane; sequence MDPFSI. Residues 7-26 form a helical membrane-spanning segment; the sequence is LLTLTLIILAQNAVRIVGKS. At 27–110 the chain is on the cytoplasmic side; sequence QIHQSIWNLY…AIEKYLGLAI (84 aa). Residues 73–106 adopt a coiled-coil conformation; that stretch reads KWTKLNRKYDQLQTEIKAVSDQVSQQQQAIEKYL. Residues 111 to 131 form a helical membrane-spanning segment; the sequence is SVTTTLPLWLFRFKYRKQPLF. Over 132 to 155 the chain is Lumenal; that stretch reads YFPKDTFPSYLEWILSFPSVPQGS. The chain crosses the membrane as a helical span at residues 156–172; it reads IGIMFWILLLNKFVSNL. Residues 173–198 are Cytoplasmic-facing; the sequence is EFIVKTFSTKVEKPVPIVKVEDLSPK.

It belongs to the WRB/GET1 family. As to quaternary structure, component of the Golgi to ER traffic (GET) complex, which is composed of GET1, GET2 and GET3. Within the complex, GET1 and GET2 form a heterotetramer which is stabilized by phosphatidylinositol binding and which binds to the GET3 homodimer.

The protein localises to the endoplasmic reticulum membrane. It is found in the golgi apparatus membrane. Its function is as follows. Required for the post-translational delivery of tail-anchored (TA) proteins to the endoplasmic reticulum. Together with GET2, acts as a membrane receptor for soluble GET3, which recognizes and selectively binds the transmembrane domain of TA proteins in the cytosol. The GET complex cooperates with the HDEL receptor ERD2 to mediate the ATP-dependent retrieval of resident ER proteins that contain a C-terminal H-D-E-L retention signal from the Golgi to the ER. This Komagataella phaffii (strain GS115 / ATCC 20864) (Yeast) protein is Golgi to ER traffic protein 1.